Reading from the N-terminus, the 387-residue chain is Paralemmin-1 (387 aa).

The residue at position 1 (Met1) is an N-acetylmethionine. Residues Glu7–Leu104 are a coiled coil. Disordered stretches follow at residues Arg22–Glu78 and Leu98–Ala133. 2 stretches are compositionally biased toward basic and acidic residues: residues Gln25–Gln41 and Asp69–Glu78. Ser116 is modified (phosphoserine). The span at Ser116–Cys125 shows a compositional bias: pro residues. Thr142 and Thr146 each carry phosphothreonine. Residue Ser163 is modified to Phosphoserine. Thr244 is subject to Phosphothreonine. Ser246 is subject to Phosphoserine. Disordered stretches follow at residues Ser246–Pro297 and Ala334–Lys378. A compositionally biased stretch (basic and acidic residues) spans Gly258–Ile273. The segment covering Gly286 to Pro297 has biased composition (low complexity). Residues Ser346 and Ser369 each carry the phosphoserine modification. S-palmitoyl cysteine attachment occurs at residues Cys381 and Cys383. Cys384 carries the post-translational modification Cysteine methyl ester. The S-farnesyl cysteine moiety is linked to residue Cys384. A propeptide spans Ser385–Met387 (removed in mature form).

It belongs to the paralemmin family. As to quaternary structure, interacts with dopamine receptor DRD3. Phosphorylated.

It is found in the cell membrane. The protein resides in the cell projection. Its subcellular location is the filopodium membrane. The protein localises to the axon. It localises to the dendrite. It is found in the dendritic spine. The protein resides in the basolateral cell membrane. Its subcellular location is the apicolateral cell membrane. Its function is as follows. Involved in plasma membrane dynamics and cell process formation. Necessary for axonal and dendritic filopodia induction, for dendritic spine maturation and synapse formation in a palmitoylation-dependent manner. The protein is Paralemmin-1 (PALM) of Sus scrofa (Pig).